The sequence spans 917 residues: Hexokinase-2 (917 aa).

M1 carries the post-translational modification N-acetylmethionine. The interval 1–16 is mitochondrial-binding peptide (MBP); it reads MIASHLLAYFFTELNH. Hexokinase domains lie at 16 to 458 and 464 to 906; these read HDQV…MVTA and ADQH…LITA. ATP is bound by residues R30 and 84-89; that span reads DLGGTN. The tract at residues 73–207 is hexokinase small subdomain 1; it reads DGTEHGEFLA…DFDIDIVAVV (135 aa). 84–88 serves as a coordination point for D-glucose 6-phosphate; that stretch reads DLGGT. Residues 155–156, 172–173, and 208–209 contribute to the D-glucose site; these read SF, TK, and ND. Residues 208-447 form a hexokinase large subdomain 1 region; the sequence is NDTVGTMMTC…CDVRFLRSED (240 aa). Residues D209 and T232 each contribute to the D-glucose 6-phosphate site. Residues N235, E260, and 291-294 contribute to the D-glucose site; that span reads QLFE. Residue 413-415 participates in D-glucose 6-phosphate binding; sequence DGS. 425–426 provides a ligand contact to ATP; sequence KR. D-glucose 6-phosphate-binding positions include S449 and 532–536; that span reads DLGGT. Residues 521-655 form a hexokinase small subdomain 2 region; that stretch reads DGTEKGDFLA…EFDLDVVAVV (135 aa). ATP is bound at residue 532-537; sequence DLGGTN. D-glucose is bound by residues 603–604, 620–621, and 656–657; these read SF, TK, and ND. The interval 656–895 is hexokinase large subdomain 2; the sequence is NDTVGTMMTC…CDVSFLQSED (240 aa). Residues D657 and T680 each contribute to the D-glucose 6-phosphate site. An ATP-binding site is contributed by T680. D-glucose is bound by residues 682 to 683, E708, and 739 to 742; these read SN and QRFE. ATP-binding positions include 747–748, 784–788, and 863–867; these read GM, TKFLS, and TLYKL. D-glucose 6-phosphate-binding positions include 861 to 863 and S897; that span reads DGT.

This sequence belongs to the hexokinase family. As to quaternary structure, monomer. Interacts with TIGAR; the interaction increases hexokinase activity in a hypoxia- and HIF1A-dependent manner. In terms of tissue distribution, predominant hexokinase isozyme expressed in insulin-responsive tissues such as skeletal muscle.

It localises to the mitochondrion outer membrane. Its subcellular location is the cytoplasm. The protein localises to the cytosol. It carries out the reaction a D-hexose + ATP = a D-hexose 6-phosphate + ADP + H(+). The catalysed reaction is D-fructose + ATP = D-fructose 6-phosphate + ADP + H(+). The enzyme catalyses D-glucose + ATP = D-glucose 6-phosphate + ADP + H(+). It functions in the pathway carbohydrate metabolism; hexose metabolism. The protein operates within carbohydrate degradation; glycolysis; D-glyceraldehyde 3-phosphate and glycerone phosphate from D-glucose: step 1/4. Its activity is regulated as follows. Hexokinase activity is specifically inhibited by 2,6-disubstituted glucosamines. Catalyzes the phosphorylation of hexose, such as D-glucose and D-fructose, to hexose 6-phosphate (D-glucose 6-phosphate and D-fructose 6-phosphate, respectively). Mediates the initial step of glycolysis by catalyzing phosphorylation of D-glucose to D-glucose 6-phosphate. Plays a key role in maintaining the integrity of the outer mitochondrial membrane by preventing the release of apoptogenic molecules from the intermembrane space and subsequent apoptosis. This chain is Hexokinase-2, found in Homo sapiens (Human).